The primary structure comprises 521 residues: GMP synthase [glutamine-hydrolyzing] (521 aa).

A Glutamine amidotransferase type-1 domain is found at 5-203 (KILILDFGSQ…VHEICGCGRD (199 aa)). Cys-82 functions as the Nucleophile in the catalytic mechanism. Catalysis depends on residues His-177 and Glu-179. Residues 204 to 396 (WNMPDYVNEA…LGLPHEMVYR (193 aa)) enclose the GMPS ATP-PPase domain. 231–237 (SGGVDSS) provides a ligand contact to ATP.

In terms of assembly, homodimer.

It carries out the reaction XMP + L-glutamine + ATP + H2O = GMP + L-glutamate + AMP + diphosphate + 2 H(+). It participates in purine metabolism; GMP biosynthesis; GMP from XMP (L-Gln route): step 1/1. In terms of biological role, catalyzes the synthesis of GMP from XMP. This chain is GMP synthase [glutamine-hydrolyzing], found in Aromatoleum aromaticum (strain DSM 19018 / LMG 30748 / EbN1) (Azoarcus sp. (strain EbN1)).